Consider the following 148-residue polypeptide: Large ribosomal subunit protein uL15 (148 aa).

The segment covering 1–30 (MPSRLRKTRKLRGHVSHGHGRIGKHRKHPG) has biased composition (basic residues). The interval 1 to 37 (MPSRLRKTRKLRGHVSHGHGRIGKHRKHPGGRGNAGG) is disordered. Histidine 39 carries the (3S)-3-hydroxyhistidine modification. Residues lysine 47 and lysine 55 each carry the N6-acetyllysine modification. A Phosphoserine modification is found at serine 68. N6-acetyllysine is present on lysine 110.

The protein belongs to the universal ribosomal protein uL15 family. As to quaternary structure, component of the large ribosomal subunit. Post-translationally, hydroxylated on His-39 by MINA.

It localises to the cytoplasm. Its function is as follows. Component of the large ribosomal subunit. The ribosome is a large ribonucleoprotein complex responsible for the synthesis of proteins in the cell. This is Large ribosomal subunit protein uL15 (Rpl27a) from Mus musculus (Mouse).